The sequence spans 130 residues: Small ribosomal subunit protein uS9 (130 aa).

It belongs to the universal ribosomal protein uS9 family.

This Neisseria gonorrhoeae (strain ATCC 700825 / FA 1090) protein is Small ribosomal subunit protein uS9.